The sequence spans 516 residues: Histidine ammonia-lyase (516 aa).

A cross-link (5-imidazolinone (Ala-Gly)) is located at residues 143–145 (ASG). Ser144 carries the post-translational modification 2,3-didehydroalanine (Ser).

Belongs to the PAL/histidase family. Contains an active site 4-methylidene-imidazol-5-one (MIO), which is formed autocatalytically by cyclization and dehydration of residues Ala-Ser-Gly.

Its subcellular location is the cytoplasm. The catalysed reaction is L-histidine = trans-urocanate + NH4(+). It functions in the pathway amino-acid degradation; L-histidine degradation into L-glutamate; N-formimidoyl-L-glutamate from L-histidine: step 1/3. This chain is Histidine ammonia-lyase, found in Koribacter versatilis (strain Ellin345).